A 249-amino-acid polypeptide reads, in one-letter code: Putative NAD(+)--arginine ADP-ribosyltransferase Vis (249 aa).

Positions 1-18 are cleaved as a signal peptide; that stretch reads MNTRFLLLLCCLSFTTFS. A TR mART core domain is found at 31 to 223; the sequence is EEEVTQLAED…IGVETVKASA (193 aa). NAD(+) is bound by residues 68 to 80, 117 to 120, and Glu137; these read SISG…DYLR and RGTW. Arg117 is an active-site residue. Active-site residues include Ser142 and Glu191. Glu191 provides a ligand contact to NAD(+).

Belongs to the Arg-specific ADP-ribosyltransferase family.

The protein localises to the secreted. It carries out the reaction L-arginyl-[protein] + NAD(+) = N(omega)-(ADP-D-ribosyl)-L-arginyl-[protein] + nicotinamide + H(+). Its function is as follows. A probable mono(ADP-ribosyl)transferase, it may ADP-ribosylate Arg in target protein(s). Upon expression in yeast cells causes cell death. The chain is Putative NAD(+)--arginine ADP-ribosyltransferase Vis from Vibrio splendidus (strain 12B01).